Reading from the N-terminus, the 391-residue chain is Multidrug resistance protein MdtL (391 aa).

Helical transmembrane passes span 4–24 (FLICSFALVLLYPAGIDMYLV), 42–62 (IAFSVYLAGMAAAMLFAGKVA), 69–89 (PVAIPGAALFIIASVFCSLAE), 93–113 (LFLAGRFLQGLGAGCCYVVAF), 131–151 (LLNGITCIIPVLAPVLGHLIM), 158–178 (SLFWTMATMGIALLMLSLFIL), 203–222 (FFLSRVVITTLSVSVILTFV), 245–265 (ALTAGVSMTVSFSTPFALGIF), 269–289 (TLMITSQVLFLAAGITLAVSP), 293–313 (VSLFGITLICAGFSVGFGVAM), 331–351 (LGIAQVCGSSLWIWLAAVVGI), and 356–376 (MLIGILIACSIVSLLLIMFVA).

The protein belongs to the major facilitator superfamily. DHA1 family. MdtL (TC 2.A.1.2.22) subfamily.

Its subcellular location is the cell inner membrane. Confers resistance to chloramphenicol. The protein is Multidrug resistance protein MdtL of Escherichia coli O45:K1 (strain S88 / ExPEC).